We begin with the raw amino-acid sequence, 254 residues long: MSFTVLIPARLASTRLPDKPLADIAGKPMVVRVAERAALSGAERVMIATDDARVQQAAADHGHAAILTRPDHPTGTDRLSEAVDALGLPDDAIVVNVQGDEPLIEPALIDAVAAQLVAAPHADIATCACPLADAEALFDPNVVKVVCAADRRALYFSRAPIPWARDALAGGARVLAPGLPAWHHIGIYAYRVAFLRRFPALSQGQLERYESLEQLRAMEHGHVIVVHHTDSAPAAGVDTPADLERARAAYTNRL.

The protein belongs to the KdsB family.

The protein resides in the cytoplasm. It catalyses the reaction 3-deoxy-alpha-D-manno-oct-2-ulosonate + CTP = CMP-3-deoxy-beta-D-manno-octulosonate + diphosphate. It participates in nucleotide-sugar biosynthesis; CMP-3-deoxy-D-manno-octulosonate biosynthesis; CMP-3-deoxy-D-manno-octulosonate from 3-deoxy-D-manno-octulosonate and CTP: step 1/1. The protein operates within bacterial outer membrane biogenesis; lipopolysaccharide biosynthesis. In terms of biological role, activates KDO (a required 8-carbon sugar) for incorporation into bacterial lipopolysaccharide in Gram-negative bacteria. The sequence is that of 3-deoxy-manno-octulosonate cytidylyltransferase from Bordetella bronchiseptica (strain ATCC BAA-588 / NCTC 13252 / RB50) (Alcaligenes bronchisepticus).